The chain runs to 456 residues: O-phospho-L-seryl-tRNA:Cys-tRNA synthase 2 (456 aa).

Pyridoxal 5'-phosphate contacts are provided by residues 146-147 (AR), Asn-251, and 274-276 (SGH). The residue at position 277 (Lys-277) is an N6-(pyridoxal phosphate)lysine.

This sequence belongs to the SepCysS family. In terms of assembly, homodimer. Interacts with SepRS. It depends on pyridoxal 5'-phosphate as a cofactor.

The enzyme catalyses O-phospho-L-seryl-tRNA(Cys) + hydrogen sulfide + H(+) = L-cysteinyl-tRNA(Cys) + phosphate. Functionally, converts O-phospho-L-seryl-tRNA(Cys) (Sep-tRNA(Cys)) to L-cysteinyl-tRNA(Cys) (Cys-tRNA(Cys)). This Methanospirillum hungatei JF-1 (strain ATCC 27890 / DSM 864 / NBRC 100397 / JF-1) protein is O-phospho-L-seryl-tRNA:Cys-tRNA synthase 2.